A 431-amino-acid polypeptide reads, in one-letter code: UDP-N-acetylglucosamine 1-carboxyvinyltransferase (431 aa).

24–25 (KN) contributes to the phosphoenolpyruvate binding site. Arginine 95 lines the UDP-N-acetyl-alpha-D-glucosamine pocket. Residue aspartate 119 is the Proton donor of the active site. Positions 314 and 336 each coordinate UDP-N-acetyl-alpha-D-glucosamine.

The protein belongs to the EPSP synthase family. MurA subfamily.

Its subcellular location is the cytoplasm. The enzyme catalyses phosphoenolpyruvate + UDP-N-acetyl-alpha-D-glucosamine = UDP-N-acetyl-3-O-(1-carboxyvinyl)-alpha-D-glucosamine + phosphate. It functions in the pathway cell wall biogenesis; peptidoglycan biosynthesis. Its function is as follows. Cell wall formation. Adds enolpyruvyl to UDP-N-acetylglucosamine. This is UDP-N-acetylglucosamine 1-carboxyvinyltransferase from Bradyrhizobium diazoefficiens (strain JCM 10833 / BCRC 13528 / IAM 13628 / NBRC 14792 / USDA 110).